The primary structure comprises 550 residues: Hydroxylamine reductase (550 aa).

4 residues coordinate [2Fe-2S] cluster: Cys-3, Cys-6, Cys-18, and Cys-25. Positions 249, 273, 317, 405, 433, 458, 492, and 494 each coordinate hybrid [4Fe-2O-2S] cluster. Position 405 is a cysteine persulfide (Cys-405).

The protein belongs to the HCP family. It depends on [2Fe-2S] cluster as a cofactor. Hybrid [4Fe-2O-2S] cluster serves as cofactor.

It localises to the cytoplasm. It carries out the reaction A + NH4(+) + H2O = hydroxylamine + AH2 + H(+). Its function is as follows. Catalyzes the reduction of hydroxylamine to form NH(3) and H(2)O. The polypeptide is Hydroxylamine reductase (Salmonella enteritidis PT4 (strain P125109)).